A 183-amino-acid polypeptide reads, in one-letter code: Peptidyl-tRNA hydrolase (183 aa).

Tyr-15 provides a ligand contact to tRNA. His-20 serves as the catalytic Proton acceptor. The tRNA site is built by Tyr-67 and Asn-69.

The protein belongs to the PTH family. Monomer.

The protein resides in the cytoplasm. It carries out the reaction an N-acyl-L-alpha-aminoacyl-tRNA + H2O = an N-acyl-L-amino acid + a tRNA + H(+). In terms of biological role, hydrolyzes ribosome-free peptidyl-tRNAs (with 1 or more amino acids incorporated), which drop off the ribosome during protein synthesis, or as a result of ribosome stalling. Functionally, catalyzes the release of premature peptidyl moieties from peptidyl-tRNA molecules trapped in stalled 50S ribosomal subunits, and thus maintains levels of free tRNAs and 50S ribosomes. This is Peptidyl-tRNA hydrolase from Chlamydia abortus (strain DSM 27085 / S26/3) (Chlamydophila abortus).